A 130-amino-acid chain; its full sequence is Small ribosomal subunit protein uS8 (130 aa).

Belongs to the universal ribosomal protein uS8 family. Part of the 30S ribosomal subunit. Contacts proteins S5 and S12.

In terms of biological role, one of the primary rRNA binding proteins, it binds directly to 16S rRNA central domain where it helps coordinate assembly of the platform of the 30S subunit. The chain is Small ribosomal subunit protein uS8 from Nitrosococcus oceani (strain ATCC 19707 / BCRC 17464 / JCM 30415 / NCIMB 11848 / C-107).